Consider the following 156-residue polypeptide: MSRRRRAKKRIICPDSIYDSRLINMLVNRVMKDGKKSLAYKIVYQTMDQIAEKTEQDPIQILEEAVRNTKPLVEVKARRVGGSAYQVPLEVNPERGTVLALQWVLAAARNRSGRSAIAKLTNELIDASKKTGGAIKKRDDVHRMAEANKAFAKFRF.

Belongs to the universal ribosomal protein uS7 family. As to quaternary structure, part of the 30S ribosomal subunit.

Its subcellular location is the plastid. The protein localises to the chloroplast. In terms of biological role, one of the primary rRNA binding proteins, it binds directly to 16S rRNA where it nucleates assembly of the head domain of the 30S subunit. In Tupiella akineta (Green alga), this protein is Small ribosomal subunit protein uS7c (rps7).